A 175-amino-acid chain; its full sequence is Large ribosomal subunit protein uL10 (175 aa).

This sequence belongs to the universal ribosomal protein uL10 family. As to quaternary structure, part of the ribosomal stalk of the 50S ribosomal subunit. The N-terminus interacts with L11 and the large rRNA to form the base of the stalk. The C-terminus forms an elongated spine to which L12 dimers bind in a sequential fashion forming a multimeric L10(L12)X complex.

Functionally, forms part of the ribosomal stalk, playing a central role in the interaction of the ribosome with GTP-bound translation factors. The protein is Large ribosomal subunit protein uL10 of Cyanothece sp. (strain PCC 7425 / ATCC 29141).